A 617-amino-acid chain; its full sequence is 1-deoxy-D-xylulose-5-phosphate synthase (617 aa).

Residues histidine 77 and 118-120 (GHS) contribute to the thiamine diphosphate site. A Mg(2+)-binding site is contributed by aspartate 149. Residues 150–151 (GA), asparagine 178, tyrosine 287, and glutamate 368 each bind thiamine diphosphate. Asparagine 178 serves as a coordination point for Mg(2+).

Belongs to the transketolase family. DXPS subfamily. As to quaternary structure, homodimer. Mg(2+) is required as a cofactor. The cofactor is thiamine diphosphate.

It catalyses the reaction D-glyceraldehyde 3-phosphate + pyruvate + H(+) = 1-deoxy-D-xylulose 5-phosphate + CO2. It functions in the pathway metabolic intermediate biosynthesis; 1-deoxy-D-xylulose 5-phosphate biosynthesis; 1-deoxy-D-xylulose 5-phosphate from D-glyceraldehyde 3-phosphate and pyruvate: step 1/1. Functionally, catalyzes the acyloin condensation reaction between C atoms 2 and 3 of pyruvate and glyceraldehyde 3-phosphate to yield 1-deoxy-D-xylulose-5-phosphate (DXP). The sequence is that of 1-deoxy-D-xylulose-5-phosphate synthase from Haemophilus ducreyi (strain 35000HP / ATCC 700724).